Reading from the N-terminus, the 2174-residue chain is Mediator of RNA polymerase II transcription subunit 13 (2174 aa).

Phosphoserine is present on Ser-395. Residues 435–477 (RNAGQQGQAPSLGQQQQILPKHKTNEKQEKSEKPQKRPLTPFH) are disordered. Positions 438–451 (GQQGQAPSLGQQQQ) are enriched in low complexity. Residues 457–469 (KTNEKQEKSEKPQ) show a composition bias toward basic and acidic residues. A phosphoserine mark is found at Ser-500, Ser-504, Ser-530, and Ser-537. The span at 709–730 (FPDKKDRQNSEREAGKKHKVED) shows a compositional bias: basic and acidic residues. 3 disordered regions span residues 709–735 (FPDK…TSSV), 749–769 (SPSI…PSTS), and 787–816 (FNSD…ESKT). Over residues 805 to 815 (SDDKASCKESK) the composition is skewed to basic and acidic residues. A phosphoserine mark is found at Ser-826 and Ser-890. The tract at residues 959–1054 (FIKEGDGSNM…ASTPSTCRPL (96 aa)) is disordered. Residues 992 to 1003 (PPSNSGAGILPS) show a composition bias toward low complexity. Over residues 1004–1015 (PSTPRFPTPRTP) the composition is skewed to pro residues. The residue at position 1029 (Ser-1029) is a Phosphoserine. A compositionally biased stretch (polar residues) spans 1040-1053 (DLYSPASTPSTCRP). 2 consecutive short sequence motifs (LXXLL motif) follow at residues 1188 to 1192 (LILLL) and 1279 to 1283 (LRMLL). Polar residues-rich tracts occupy residues 1484–1498 (SQSL…NTGN) and 1563–1606 (SMNS…SLPT). Disordered regions lie at residues 1484 to 1505 (SQSL…PSAT), 1557 to 1617 (SFPP…ESTM), and 2015 to 2048 (LPAS…RLLS).

The protein belongs to the Mediator complex subunit 13 family. In terms of assembly, component of the Mediator complex, which is composed of MED1, MED4, MED6, MED7, MED8, MED9, MED10, MED11, MED12, MED13, MED13L, MED14, MED15, MED16, MED17, MED18, MED19, MED20, MED21, MED22, MED23, MED24, MED25, MED26, MED27, MED29, MED30, MED31, CCNC, CDK8 and CDC2L6/CDK11. The MED12, MED13, CCNC and CDK8 subunits form a distinct module termed the CDK8 module. Mediator containing the CDK8 module is less active than Mediator lacking this module in supporting transcriptional activation. Individual preparations of the Mediator complex lacking one or more distinct subunits have been variously termed ARC, CRSP, DRIP, PC2, SMCC and TRAP. In terms of tissue distribution, ubiquitous.

Its subcellular location is the nucleus. Its function is as follows. Component of the Mediator complex, a coactivator involved in the regulated transcription of nearly all RNA polymerase II-dependent genes. Mediator functions as a bridge to convey information from gene-specific regulatory proteins to the basal RNA polymerase II transcription machinery. Mediator is recruited to promoters by direct interactions with regulatory proteins and serves as a scaffold for the assembly of a functional preinitiation complex with RNA polymerase II and the general transcription factors. In Homo sapiens (Human), this protein is Mediator of RNA polymerase II transcription subunit 13.